The chain runs to 445 residues: Alpha/beta hydrolase psoB (445 aa).

Ser-246 acts as the Nucleophile in catalysis.

The protein belongs to the AB hydrolase superfamily. FUS2 hydrolase family. As to quaternary structure, homodimer.

The protein operates within secondary metabolite biosynthesis. In terms of biological role, alpha/beta hydrolase; part of the gene cluster that mediates the biosynthesis of pseurotin A, a competitive inhibitor of chitin synthase and an inducer of nerve-cell proliferation. The PKS-NRPS hybrid synthetase psoA is responsible for the biosynthesis of azaspirene, one of the first intermediates having the 1-oxa-7-azaspiro[4,4]-non-2-ene-4,6-dione core of pseurotin, via condensation of one acetyl-CoA, 4 malonyl-CoA, and a L-phenylalanine molecule. The dual-functional monooxygenase/methyltransferase psoF seems to be involved in the addition of the C3 methyl group onto the pseurotin scaffold. Azaspirene is then converted to synerazol through 4 steps including oxidation of C17 by the cytochrome P450 monooxygenase psoD, O-methylation of the hydroxy group of C8 by the methyltransferase psoC, and the trans-to-cis isomerization of the C13 olefin by the glutathione S-transferase psoE. The fourth step of synerazol production is performed by the dual-functional monooxygenase/methyltransferase psoF which seems to catalyze the epoxidation of the intermediate deepoxy-synerazol. Synerazol can be attacked by a water molecule nonenzymatically at two different positions to yield two diol products, pseurotin A and pseurotin D. The sequence is that of Alpha/beta hydrolase psoB from Aspergillus fumigatus (strain ATCC MYA-4609 / CBS 101355 / FGSC A1100 / Af293) (Neosartorya fumigata).